Consider the following 303-residue polypeptide: Probable endonuclease 4 (303 aa).

9 residues coordinate Zn(2+): histidine 75, histidine 115, glutamate 151, aspartate 185, histidine 188, histidine 221, aspartate 234, histidine 236, and glutamate 266.

It belongs to the AP endonuclease 2 family. Requires Zn(2+) as cofactor.

It catalyses the reaction Endonucleolytic cleavage to 5'-phosphooligonucleotide end-products.. Endonuclease IV plays a role in DNA repair. It cleaves phosphodiester bonds at apurinic or apyrimidinic (AP) sites, generating a 3'-hydroxyl group and a 5'-terminal sugar phosphate. In Ureaplasma parvum serovar 3 (strain ATCC 700970), this protein is Probable endonuclease 4.